The sequence spans 256 residues: GDSL esterase/lipase At1g18120 (256 aa).

Residues 1–49 form the signal peptide; it reads MYRVYKNNKFILISIPRITNKLWQKNCNLVILLGVLLVLTLFHDPIIVA. Ser67 (nucleophile) is an active-site residue. N-linked (GlcNAc...) asparagine glycosylation is present at Asn181.

The protein belongs to the 'GDSL' lipolytic enzyme family.

The protein resides in the secreted. This is GDSL esterase/lipase At1g18120 from Arabidopsis thaliana (Mouse-ear cress).